We begin with the raw amino-acid sequence, 200 residues long: NADH-quinone oxidoreductase subunit C (200 aa).

This sequence belongs to the complex I 30 kDa subunit family. As to quaternary structure, NDH-1 is composed of 14 different subunits. Subunits NuoB, C, D, E, F, and G constitute the peripheral sector of the complex.

Its subcellular location is the cell inner membrane. The enzyme catalyses a quinone + NADH + 5 H(+)(in) = a quinol + NAD(+) + 4 H(+)(out). Its function is as follows. NDH-1 shuttles electrons from NADH, via FMN and iron-sulfur (Fe-S) centers, to quinones in the respiratory chain. The immediate electron acceptor for the enzyme in this species is believed to be ubiquinone. Couples the redox reaction to proton translocation (for every two electrons transferred, four hydrogen ions are translocated across the cytoplasmic membrane), and thus conserves the redox energy in a proton gradient. This Maricaulis maris (strain MCS10) (Caulobacter maris) protein is NADH-quinone oxidoreductase subunit C.